The sequence spans 597 residues: Spastin (597 aa).

Topologically, residues 1 to 20 (MPNNDILRPLAIPAKYVGSF) are cytoplasmic. An intramembrane region (helical) is located at residues 21–37 (LVFLYNGLYFVFVVNLW). At 38-597 (SRLFGKATKT…DWNRLYGSNA (560 aa)) the chain is on the cytoplasmic side. Residues 56–80 (RKLGKDMASRAPPRRGQSSEDNEDG) form a disordered region. The MIT domain maps to 91–168 (HHKQAYAYIA…ENTRERMDEL (78 aa)). The interval 193–289 (SARKTSSEPS…PAMMAKQSCV (97 aa)) is disordered. Over residues 214-231 (SYKQSKSYKNSTTVTTKR) the composition is skewed to polar residues. A compositionally biased stretch (low complexity) spans 232-252 (SQASPSFSSSSSSVNSTAGSS).

It belongs to the AAA ATPase family. Spastin subfamily. In terms of assembly, homohexamer. The homohexamer is stabilized by ATP-binding. The homohexamer may adopt a ring conformation through which microtubules pass prior to being severed. Interacts with microtubules.

It is found in the membrane. It localises to the cytoplasm. Its subcellular location is the cytoskeleton. The protein resides in the microtubule organizing center. The protein localises to the centrosome. The enzyme catalyses n ATP + n H2O + a microtubule = n ADP + n phosphate + (n+1) alpha/beta tubulin heterodimers.. In terms of biological role, ATP-dependent microtubule severing protein. Microtubule severing may promote reorganization of cellular microtubule arrays and the release of microtubules from the microtubule organizing center following nucleation. The protein is Spastin of Nematostella vectensis (Starlet sea anemone).